The sequence spans 66 residues: Large ribosomal subunit protein bL35 (66 aa).

Belongs to the bacterial ribosomal protein bL35 family.

The protein is Large ribosomal subunit protein bL35 of Phenylobacterium zucineum (strain HLK1).